A 489-amino-acid chain; its full sequence is Glycogen synthase (489 aa).

ADP-alpha-D-glucose is bound at residue K17.

Belongs to the glycosyltransferase 1 family. Bacterial/plant glycogen synthase subfamily.

It catalyses the reaction [(1-&gt;4)-alpha-D-glucosyl](n) + ADP-alpha-D-glucose = [(1-&gt;4)-alpha-D-glucosyl](n+1) + ADP + H(+). It participates in glycan biosynthesis; glycogen biosynthesis. Its function is as follows. Synthesizes alpha-1,4-glucan chains using ADP-glucose. This Nitratidesulfovibrio vulgaris (strain ATCC 29579 / DSM 644 / CCUG 34227 / NCIMB 8303 / VKM B-1760 / Hildenborough) (Desulfovibrio vulgaris) protein is Glycogen synthase.